A 156-amino-acid polypeptide reads, in one-letter code: ATP synthase subunit b (156 aa).

The helical transmembrane segment at 7–29 (LLGQAISFALFVWFCMKYVWPPL) threads the bilayer.

It belongs to the ATPase B chain family. As to quaternary structure, F-type ATPases have 2 components, F(1) - the catalytic core - and F(0) - the membrane proton channel. F(1) has five subunits: alpha(3), beta(3), gamma(1), delta(1), epsilon(1). F(0) has three main subunits: a(1), b(2) and c(10-14). The alpha and beta chains form an alternating ring which encloses part of the gamma chain. F(1) is attached to F(0) by a central stalk formed by the gamma and epsilon chains, while a peripheral stalk is formed by the delta and b chains.

The protein resides in the cell inner membrane. In terms of biological role, f(1)F(0) ATP synthase produces ATP from ADP in the presence of a proton or sodium gradient. F-type ATPases consist of two structural domains, F(1) containing the extramembraneous catalytic core and F(0) containing the membrane proton channel, linked together by a central stalk and a peripheral stalk. During catalysis, ATP synthesis in the catalytic domain of F(1) is coupled via a rotary mechanism of the central stalk subunits to proton translocation. Component of the F(0) channel, it forms part of the peripheral stalk, linking F(1) to F(0). This is ATP synthase subunit b from Vibrio parahaemolyticus serotype O3:K6 (strain RIMD 2210633).